The primary structure comprises 1166 residues: Folliculin-interacting protein 1 (1166 aa).

Residues 37–478 (FDPSQIRLIV…TVMPNGQPPI (442 aa)) form the uDENN FNIP1/2-type domain. Serine 220, serine 230, serine 232, and serine 261 each carry phosphoserine; by AMPK. Residue threonine 294 is modified to Phosphothreonine. The residue at position 296 (serine 296) is a Phosphoserine. Residues 486-1092 (SSQSVDMLAK…VSNLLHSTLQ (607 aa)) form the cDENN FNIP1/2-type domain. Serine 593 carries the phosphoserine; by AMPK modification. Serine 594 bears the Phosphoserine mark. Cysteine 608 and cysteine 610 together coordinate Zn(2+). Positions 608–615 (CNCKYCSH) match the Cys degron motif. The KY-finger stretch occupies residues 611–612 (KY). Residues cysteine 613 and histidine 615 each contribute to the Zn(2+) site. Phosphoserine is present on residues serine 760 and serine 763. 2 disordered regions span residues 781-817 (TKPL…VSEE) and 912-956 (LVPH…HDMT). Composition is skewed to basic and acidic residues over residues 783-805 (PLKE…KDQS) and 915-925 (HGDKESSDKKI). Residues 929–1166 (TEWDIPRNES…HSPYVAQILL (238 aa)) form an interaction with HSP90AA1 region. At serine 938 the chain carries Phosphoserine; alternate; by CK2. Residue serine 938 is glycosylated (O-linked (GlcNAc) serine; alternate). Phosphoserine; by CK2 occurs at positions 939, 941, 946, and 948. The 56-residue stretch at 1102–1157 (FCVMHLEDRLQELYFKSKMLSEYLRGQMRVHVKELGVVLGIESSDLPLLAAVASTH) folds into the dDENN FNIP1/2-type domain. Residue lysine 1119 forms a Glycyl lysine isopeptide (Lys-Gly) (interchain with G-Cter in ubiquitin) linkage.

This sequence belongs to the FNIP family. In terms of assembly, homodimer and homomultimer. Heterodimer and heteromultimer with FNIP2. Interacts with FLCN (via C-terminus). Component of the lysosomal folliculin complex (LFC), composed of FLCN, FNIP1 (or FNIP2), RagA/RRAGA or RagB/RRAGB GDP-bound, RagC/RRAGC or RagD/RRAGD GTP-bound, and Ragulator. Interacts with HSPCA and with the PRKAA1, PRKAB1 and PRKAG1 subunits of 5'-AMP-activated protein kinase (AMPK). Phosphorylated FLCN and AMPK are preferentially bound. Interacts with HSP70, STIP1, PTGES3, CDC37, BRAF, GCR and CDK4. Interacts with HSP90AA1; the interaction inhibits HSP90AA1 ATPase activity. Interacts with ATP2A2. Post-translationally, phosphorylated by AMPK in response to energetic stress. Phosphorylation by AMPK in response to mitochondrial damage promotes inactivation of the non-canonical mTORC1 signaling, nuclear translocation of TFEB and TFE3, inducing transcription of lysosomal or autophagy genes. Sequential phosphorylation by CK2 promotes its gradual interaction with HSP90AA1/Hsp90. Priming phosphorylation at Ser-938 is followed by relay phosphorylation at Ser-939, Ser-941, Ser-946 and Ser-948, promoting its gradual interaction with HSP90AA1/Hsp90. This leads to incremental inhibition of HSP90AA1/Hsp90 ATPase activity and gradual activation of both kinase and non-kinase clients. Dephosphorylated by protein phosphatase 5 (PP5), promoting glycosylation by OGT. GlcNAcylation at Ser-938 by OGT following dephosphorylation by protein phosphatase 5 (PP5) promotes ubiquitination and degradation by the proteasome. In terms of processing, ubiquitinated through 'Lys-11' linkage of ubiquitin moieties at Lys-1119 following glycosylation by OGT, leading to its degradation by the proteasome. Ubiquitinated by the CRL2(FEM1B) complex in response to reductive stress: reductive stress causes reduction of the conserved Cys degron in FNIP1, followed by zinc-binding, zinc acting as a molecular glue for recognition by the CRL2(FEM1B) complex. Ubiquitination leads to FNIP1 degradation, and activation of mitochondria to recalibrate reactive oxygen species (ROS). Post-translationally, oxidation of the Cys degron in normal conditions promotes its stabilization by preventing recognition and ubiquitination by the CRL2(FEM1B) complex. Strong expression is found in the heart, liver placenta, muscle, nasal mucosa, salivary gland and uvula and moderate expression in kidney and lung. Higher levels detected in clear cell renal cell carcinoma (RCC) and chromophobe RCC than in normal kidney tissue. Expressed in peripheral blood mononuclear cells.

The protein resides in the lysosome membrane. Its subcellular location is the cytoplasm. The protein localises to the cytosol. Functionally, binding partner of the GTPase-activating protein FLCN: involved in the cellular response to amino acid availability by regulating the non-canonical mTORC1 signaling cascade controlling the MiT/TFE factors TFEB and TFE3. Required to promote FLCN recruitment to lysosomes and interaction with Rag GTPases, leading to activation of the non-canonical mTORC1 signaling. In low-amino acid conditions, component of the lysosomal folliculin complex (LFC) on the membrane of lysosomes, which inhibits the GTPase-activating activity of FLCN, thereby inactivating mTORC1 and promoting nuclear translocation of TFEB and TFE3. Upon amino acid restimulation, disassembly of the LFC complex liberates the GTPase-activating activity of FLCN, leading to activation of mTORC1 and subsequent inactivation of TFEB and TFE3. Together with FLCN, regulates autophagy: following phosphorylation by ULK1, interacts with GABARAP and promotes autophagy. In addition to its role in mTORC1 signaling, also acts as a co-chaperone of HSP90AA1/Hsp90: following gradual phosphorylation by CK2, inhibits the ATPase activity of HSP90AA1/Hsp90, leading to activate both kinase and non-kinase client proteins of HSP90AA1/Hsp90. Acts as a scaffold to load client protein FLCN onto HSP90AA1/Hsp90. Competes with the activating co-chaperone AHSA1 for binding to HSP90AA1, thereby providing a reciprocal regulatory mechanism for chaperoning of client proteins. Also acts as a core component of the reductive stress response by inhibiting activation of mitochondria in normal conditions: in response to reductive stress, the conserved Cys degron is reduced, leading to recognition and polyubiquitylation by the CRL2(FEM1B) complex, followed by proteasomal. Required for B-cell development. This chain is Folliculin-interacting protein 1, found in Homo sapiens (Human).